A 358-amino-acid chain; its full sequence is UPF0283 membrane protein PM0909 (358 aa).

3 helical membrane-spanning segments follow: residues 62–82 (LALT…QWLV), 90–110 (WIYF…VSSL), and 213–233 (ALEA…MFFL).

This sequence belongs to the UPF0283 family.

The protein resides in the cell inner membrane. In Pasteurella multocida (strain Pm70), this protein is UPF0283 membrane protein PM0909.